We begin with the raw amino-acid sequence, 987 residues long: VPS35 endosomal protein sorting factor-like (987 aa).

Low complexity predominate over residues 1-23 (MAERQSASSPTPSSPPQQQQQTP). The interval 1–115 (MAERQSASSP…DPLNNPLEKK (115 aa)) is disordered. Residues 43-63 (NGREVERHPLNSITKTEDTGK) are compositionally biased toward basic and acidic residues. A compositionally biased stretch (low complexity) spans 66–111 (QSSLSSNASSLQSAAAAASSSTATTDIDPLNNNNNNNTDIDPLNNP).

This sequence belongs to the VPS35L family. Component of the heterotrimeric retriever complex.

It localises to the endosome. Its function is as follows. Acts as a component of the retriever complex. The retriever complex is a heterotrimeric complex related to retromer cargo-selective complex (CSC) and essential for retromer-independent retrieval and recycling of numerous cargos. The chain is VPS35 endosomal protein sorting factor-like from Dictyostelium discoideum (Social amoeba).